Consider the following 112-residue polypeptide: DNA-binding protein TGAM_1196 (112 aa).

This sequence belongs to the PDCD5 family.

This chain is DNA-binding protein TGAM_1196, found in Thermococcus gammatolerans (strain DSM 15229 / JCM 11827 / EJ3).